The chain runs to 410 residues: MKVQIIAVGTELLLGDTLDTNSNYLSIKMRELGFDVYKRVVVGDNYDRLYKEIEEGLQQNDLIITTGGLGPTEDDITKKCCCDCLGKKMVLNEKSYAKLRKYFNEDEKAIQGNIKQCMFPEDAIVFENFNGTADCALIENNGKRILFLPGPPAEMKPIYENQVQQVLEQFATDCIISETLNISILGEWDMNERVKDIIESSNNPTVAPYFKKDKRILRITAKASDRQTALDMIAKKKQELRDRLGMYVFGENDETIEESVYKVLKEHDLSIMTSESITGGMIASKLVNVSGVSDYLKRSLVVYSNEAKIELLGVKAETIDTYGVVSENVAFEMVERMFEKFNVDCSISTTGFASGENAGLVYVGLGYKNTIKTLKLQLHGERNKIRNRVSNRALAELRLMILENVSRETF.

It belongs to the CinA family.

This Finegoldia magna (strain ATCC 29328 / DSM 20472 / WAL 2508) (Peptostreptococcus magnus) protein is Putative competence-damage inducible protein.